The chain runs to 578 residues: NADPH oxidase 4 (578 aa).

Residues 1–16 (MALSWRSWLANEGVKH) are Cytoplasmic-facing. The helical transmembrane segment at 17 to 37 (LCLLVWLSLNVLLFWKTFLLY) threads the bilayer. Residues 38–62 (NQGPEYYYIHQMLGLGLCLSRASAS) are Extracellular-facing. The region spanning 58–303 (RASASVLNLN…YCAERLYRCI (246 aa)) is the Ferric oxidoreductase domain. The helical transmembrane segment at 63–83 (VLNLNCSLILLPMCRTVLAYL) threads the bilayer. Residues 84–104 (RGSQKVPSRRTRRLLDKSKTL) are Cytoplasmic-facing. A helical membrane pass occupies residues 105 to 125 (HITCGITICIFSGVHVAAHLV). Topologically, residues 126-154 (NALNFSVNYSEHFLALNAARYQNEDPRKL) are extracellular. Asparagine 133 is a glycosylation site (N-linked (GlcNAc...) asparagine). The helical transmembrane segment at 155 to 175 (LFTTVPGLTGVCMVVVLFLMV) threads the bilayer. Over 176–188 (TASTYAIRVSNYD) the chain is Cytoplasmic. A helical transmembrane segment spans residues 189-209 (IFWYTHNLFFVFYMLLLLHVS). The Extracellular segment spans residues 210–424 (GGLLKYQTNL…SPFEESLNYE (215 aa)). Residues 218-273 (NLDTHPPGCISLNRTPSQNMSIADYVSEHFHGSLPGGFSKLEDHYQKTLVKICLEE) are E-loop; essential for H2O2 generating catalytic activity. The tract at residues 248–575 (HGSLPGGFSK…YGTKFEYNKE (328 aa)) is mediates interaction with TLR4. Residues 304 to 419 (RSNKPVTIIS…DGPFGSPFEE (116 aa)) enclose the FAD-binding FR-type domain. Residues 425–445 (VSLCVAGGIGVTPFASILNTL) form a helical membrane-spanning segment. At 446–578 (LDDWKPYKLR…KFEYNKESFS (133 aa)) the chain is on the cytoplasmic side.

Interacts with TLR4. Interacts with, relocalizes and stabilizes CYBA/p22phox. Interacts with protein disulfide isomerase. Interacts with PPP1R15A. Interacts with LRRC8A; this interaction prevents the ubiquitin-mediated degradation of LRRC8A. Requires heme as cofactor. Post-translationally, N-glycosylation is required for the function. As to expression, expressed in vascular smooth muscle.

It is found in the cytoplasm. Its subcellular location is the endoplasmic reticulum membrane. It localises to the cell membrane. The protein localises to the cell junction. The protein resides in the focal adhesion. It is found in the nucleus. The catalysed reaction is NADPH + 2 O2 = 2 superoxide + NADP(+) + H(+). The enzyme catalyses NADPH + O2 + H(+) = H2O2 + NADP(+). With respect to regulation, activated by insulin. Inhibited by diphenylene iodonium. Inhibited by plumbagin. Activated by phorbol 12-myristate 13-acetate (PMA). In terms of biological role, NADPH oxidase that catalyzes predominantly the reduction of oxygen to H2O2. Can also catalyze to a smaller extent, the reduction of oxygen to superoxide. May function as an oxygen sensor regulating the KCNK3/TASK-1 potassium channel and HIF1A activity. May regulate insulin signaling cascade. May play a role in apoptosis, bone resorption and lipolysaccharide-mediated activation of NFKB. May produce superoxide in the nucleus and play a role in regulating gene expression upon cell stimulation. Promotes ferroptosis, reactive oxygen species production and reduced glutathione (GSH) levels by activating NLRP3 inflammasome activation and cytokine release. This Rattus norvegicus (Rat) protein is NADPH oxidase 4 (Nox4).